Consider the following 59-residue polypeptide: Protein translocase subunit SecE (59 aa).

Residues 37–57 (LIVLLFVGLLAFLVQLAFSIL) form a helical membrane-spanning segment.

The protein belongs to the SecE/SEC61-gamma family. In terms of assembly, component of the Sec protein translocase complex. Heterotrimer consisting of SecY (alpha), SecG (beta) and SecE (gamma) subunits. The heterotrimers can form oligomers, although 1 heterotrimer is thought to be able to translocate proteins. Interacts with the ribosome. May interact with SecDF, and other proteins may be involved.

It localises to the cell membrane. In terms of biological role, essential subunit of the Sec protein translocation channel SecYEG. Clamps together the 2 halves of SecY. May contact the channel plug during translocation. This chain is Protein translocase subunit SecE, found in Metallosphaera sedula (strain ATCC 51363 / DSM 5348 / JCM 9185 / NBRC 15509 / TH2).